Here is a 781-residue protein sequence, read N- to C-terminus: Catenin beta-1 (781 aa).

Residues glycine 34–aspartate 56 are disordered. ARM repeat units follow at residues asparagine 141–lysine 180, arginine 225–leucine 264, glutamate 267–tyrosine 306, serine 351–aspartate 390, alanine 391–cysteine 429, tyrosine 432–serine 473, glutamate 479–leucine 519, proline 521–glutamate 562, isoleucine 584–glutamine 623, and lysine 625–glutamate 664. Residues methionine 735–glycine 745 are compositionally biased toward basic and acidic residues. Residues methionine 735–leucine 781 form a disordered region.

Belongs to the beta-catenin family. Interacts with EP-Cadherin/CDH3. Interacts with custos; the interaction is positively regulated by Wnt stimulation. Phosphorylation by gsk3b promotes ubiquitination and subsequent degradation by the proteasome. In terms of processing, ubiquitinated when phosphorylated by gsk3b, leading to its degradation. In terms of tissue distribution, expressed at intercalated disks in the heart (at protein level).

The protein resides in the cytoplasm. Its subcellular location is the nucleus. It is found in the cell membrane. Key downstream component of the canonical Wnt signaling pathway. In the absence of Wnt, forms a complex with axin1, axin2, apc, csnk1a1 and gsk3b that promotes phosphorylation on N-terminal Ser and Thr residues and ubiquitination of ctnnb1 and its subsequent degradation by the proteasome. In the presence of Wnt ligand, ctnnb1 is not ubiquitinated and accumulates in the nucleus, where it acts as a coactivator for transcription factors of the TCF/LEF family, leading to activate Wnt responsive genes. Plays a key role in dorsoventral patterning: in prospective ventral blastomeres, its down-regulation by axin1 and axin2 leads to inhibit the Wnt signaling pathway, while in prospective dorsal blastomeres, degradation of axin results in stabilization and nuclear translocation of ctnnb1. This Xenopus laevis (African clawed frog) protein is Catenin beta-1.